A 195-amino-acid polypeptide reads, in one-letter code: MKIIVASSNKGKIKEIKKFFEGIEILPYSELIEPFEIEENGTTFKDNAIIKAKTIYEKLPGSIVLADDSGISVPVLGGVPGIYSARFAGAGASDKDNLYKLIDELKKRNIKKTYAYYTAAIALATPYGIFTTHGFMHGNVIDEARGNKGFGYDPMFIPKGFDKTLGELDENIKKSISHRSKALELANILLKSINN.

7-12 (SSNKGK) lines the substrate pocket. Residues glutamate 38 and aspartate 68 each coordinate Mg(2+). Aspartate 68 functions as the Proton acceptor in the catalytic mechanism. Residues serine 69, 150-153 (FGYD), lysine 173, and 178-179 (HR) each bind substrate.

It belongs to the HAM1 NTPase family. Homodimer. The cofactor is Mg(2+).

It carries out the reaction XTP + H2O = XMP + diphosphate + H(+). It catalyses the reaction dITP + H2O = dIMP + diphosphate + H(+). The enzyme catalyses ITP + H2O = IMP + diphosphate + H(+). Pyrophosphatase that catalyzes the hydrolysis of nucleoside triphosphates to their monophosphate derivatives, with a high preference for the non-canonical purine nucleotides XTP (xanthosine triphosphate), dITP (deoxyinosine triphosphate) and ITP. Seems to function as a house-cleaning enzyme that removes non-canonical purine nucleotides from the nucleotide pool, thus preventing their incorporation into DNA/RNA and avoiding chromosomal lesions. This Nautilia profundicola (strain ATCC BAA-1463 / DSM 18972 / AmH) protein is dITP/XTP pyrophosphatase.